We begin with the raw amino-acid sequence, 328 residues long: Putative glycosyltransferase 41 (328 aa).

The protein belongs to the glycosyltransferase group 1 family. Glycosyltransferase 4 subfamily.

The chain is Putative glycosyltransferase 41 (SIFV0041) from Sulfolobus islandicus filamentous virus (isolate Iceland/Hveragerdi) (SIFV).